A 188-amino-acid chain; its full sequence is Ribosome-recycling factor (188 aa).

It belongs to the RRF family.

Its subcellular location is the cytoplasm. In terms of biological role, responsible for the release of ribosomes from messenger RNA at the termination of protein biosynthesis. May increase the efficiency of translation by recycling ribosomes from one round of translation to another. This chain is Ribosome-recycling factor, found in Cereibacter sphaeroides (strain ATCC 17025 / ATH 2.4.3) (Rhodobacter sphaeroides).